A 234-amino-acid polypeptide reads, in one-letter code: N-acetyl-alpha-D-glucosaminyl L-malate deacetylase 1 (234 aa).

Residues His12, Asp15, and His113 each coordinate Zn(2+).

Belongs to the PIGL family. As to quaternary structure, homohexamer. Trimer of dimers. Zn(2+) is required as a cofactor.

The catalysed reaction is (S)-malyl N-acetyl-alpha-D-glucosaminide + H2O = (S)-malyl alpha-D-glucosaminide + acetate. Functionally, involved in bacillithiol (BSH) biosynthesis. Catalyzes the second step of the pathway, the deacetylation of N-acetylglucosaminylmalate (GlcNAc-Mal) to glucosamine malate (GlcN-Mal). In Bacillus cereus (strain ATCC 14579 / DSM 31 / CCUG 7414 / JCM 2152 / NBRC 15305 / NCIMB 9373 / NCTC 2599 / NRRL B-3711), this protein is N-acetyl-alpha-D-glucosaminyl L-malate deacetylase 1.